Here is a 309-residue protein sequence, read N- to C-terminus: Ribokinase (309 aa).

Substrate contacts are provided by residues 14–16, 42–46, and Glu143; these read NAD and GKGAN. Residues Asn187 and 223-228 contribute to the ATP site; that span reads TLGSRG. 2 residues coordinate K(+): Asp249 and Ile251. Residues 254–255 and His279 each bind ATP; that span reads GD. Asp255 is a substrate binding site. Asp255 (proton acceptor) is an active-site residue. The K(+) site is built by Ala285, Arg288, Gly290, and Ser294.

Belongs to the carbohydrate kinase PfkB family. Ribokinase subfamily. Homodimer. It depends on Mg(2+) as a cofactor.

It is found in the cytoplasm. The enzyme catalyses D-ribose + ATP = D-ribose 5-phosphate + ADP + H(+). It participates in carbohydrate metabolism; D-ribose degradation; D-ribose 5-phosphate from beta-D-ribopyranose: step 2/2. Activated by a monovalent cation that binds near, but not in, the active site. The most likely occupant of the site in vivo is potassium. Ion binding induces a conformational change that may alter substrate affinity. Functionally, catalyzes the phosphorylation of ribose at O-5 in a reaction requiring ATP and magnesium. The resulting D-ribose-5-phosphate can then be used either for sythesis of nucleotides, histidine, and tryptophan, or as a component of the pentose phosphate pathway. The protein is Ribokinase of Escherichia coli O157:H7.